A 170-amino-acid polypeptide reads, in one-letter code: UPF0260 protein RPB_3505 (170 aa).

The protein belongs to the UPF0260 family.

This Rhodopseudomonas palustris (strain HaA2) protein is UPF0260 protein RPB_3505.